The chain runs to 828 residues: MKYLQFLAAVAAVSAFSGPVLAGSSVENTNQVLPVQLTGALFSQVANGQHAERAIKVDNSAQFVPVQGTIAALSAVLNEQKAGKRSFSVENTNQVLPIDVIIAGLSQVLTEQKAAKRDNIVKNTNQILPIEATIAALSAIANGQKAATKRSTAVDNSSQFIPIQGTLAAFSNVLNSQKATKRNTGKVVDNTNQVVPIQGTLAALSTVLNEQKASKRGVDVDNSSQTLPIEATIAALSTIANGQQAGKRNAPDFDVVKNSNQVLPIQATAALLSQIANGQSVEKRNAPDFDVVKNSNQVLPIQATAALLSQIANGQSVEKRNAPDFDVVKNSNQVLPIQATAALLSQIANGQSVEKRNAPDFDVVKNSNQVLPIQATAALLSQIANGQSVEKRNAPDFDSVKNSNQVVPIQATAALLSAVKNLQSVERNAPDFDSVKNSNQVVPIQATAALLSQIANGQSVEKRNAPDFDSVKNSNQVVPIQGTAALLSVVGNGQSVSKRHEGENNIVDNTNQVIPIQATIAALSTLLNSQKAERSYSVDNTNQVLPIEATLAAFSSVLNSQKAERSYSVENDNEVVPVDLVAAALSQVANGQKVTRRGETKESIKHNVNQVAPAQASLSALSDIVNSAHSRRAMDVKQYETLQYAINALQQALDKTNTGDKTHHVDAMTGTAEHFDERDAGLDPAAFLGSAASGISVPVGNKDLLKSLVKRYAAEEDEAMAKRTPSLNGRGQRPRPRNSSSSEHNNNGQCSVGEAKCCSQVITDEGKKKTLAGLLGFNNLVGDIGLNCQQIPVLGVSLQSICKATPVCCTNVSQDGLVNVGCTSIPIN.

Positions 1 to 22 (MKYLQFLAAVAAVSAFSGPVLA) are cleaved as a signal peptide. Residues N156, N222, and N738 are each glycosylated (N-linked (GlcNAc...) asparagine). Disulfide bonds link C750–C808, C757–C802, C758–C788, and C809–C822. Residue N811 is glycosylated (N-linked (GlcNAc...) asparagine).

It in the C-terminal section; belongs to the fungal hydrophobin family. As to quaternary structure, self-assembles to form functional amyloid fibrils called rodlets. Self-assembly into fibrillar rodlets occurs spontaneously at hydrophobic:hydrophilic interfaces and the rodlets further associate laterally to form amphipathic monolayers. Hum3 is an atypical hydrophobin that consists in a repetitive repellent-like region that spans 578 aa which is separated from a hydrophobin-like domain by a spacer region containing three possible kex2 processing sites. The repetitive region contains 17 amphipathic repeats of 31-36 aa each of them with a C-terminal putative kex2 processing motif.

The protein localises to the secreted. The protein resides in the cell wall. In terms of biological role, aerial growth, conidiation, and dispersal of filamentous fungi in the environment rely upon a capability of their secreting small amphipathic proteins called hydrophobins (HPBs) with low sequence identity. Class I can self-assemble into an outermost layer of rodlet bundles on aerial cell surfaces, conferring cellular hydrophobicity that supports fungal growth, development and dispersal; whereas Class II form highly ordered films at water-air interfaces through intermolecular interactions but contribute nothing to the rodlet structure. Atypical class I hydrophobin that is preceded by a signal sequence and 17 imperfect repeats. The repeated peptides might function as repellents whereas the class I hydrophobin seems not to be crucial for the formation of aerial hyphae. Hydrophobins of Mycosarcoma maydis have been functionally replaced, at least partially, by repellents. Hum3 and rsp1 together are pathogenicity proteins that share an essential function in early stages of the infection. In Mycosarcoma maydis (Corn smut fungus), this protein is Class I hydrophobin hum3.